Here is a 204-residue protein sequence, read N- to C-terminus: Methylthioribulose-1-phosphate dehydratase (204 aa).

Zn(2+)-binding residues include H94 and H96.

This sequence belongs to the aldolase class II family. MtnB subfamily. Requires Zn(2+) as cofactor.

The enzyme catalyses 5-(methylsulfanyl)-D-ribulose 1-phosphate = 5-methylsulfanyl-2,3-dioxopentyl phosphate + H2O. The protein operates within amino-acid biosynthesis; L-methionine biosynthesis via salvage pathway; L-methionine from S-methyl-5-thio-alpha-D-ribose 1-phosphate: step 2/6. Functionally, catalyzes the dehydration of methylthioribulose-1-phosphate (MTRu-1-P) into 2,3-diketo-5-methylthiopentyl-1-phosphate (DK-MTP-1-P). This chain is Methylthioribulose-1-phosphate dehydratase, found in Pseudomonas syringae pv. syringae (strain B728a).